We begin with the raw amino-acid sequence, 364 residues long: MSVMVVRKKVTRKWEKLPGRNTFCCDGRVMMARQKGIFYLTLFLILGTCTLFFAFECRYLAVQQSPAIPVFAAMLFLFSMATLLRASFSDPGVIPRALPDEAAFIEMEIEATNGAVPQGQRPPPRIKNSQINNQIVKLKYCYTCKIFRPPRASHCSICDNCVERFDHHCPWVGNCVGKRNYRYFYLFILSLSLLTIYVFAFNIVYVALKSLKIGFLETLKETPGTVLEVLICFFTLWSVVGLTGFHTFLVALNQTTNEDIKGSWTGKNRVQNPYSHGNIVKNCCEVLCGPLPPSVLDRRGILPLEESGSRPPSTQETSSSLLPQSPAPTEHLNSNEMPDDSSTPEEMPPPEPPEPPQEAAEAEK.

Residues 1-35 (MSVMVVRKKVTRKWEKLPGRNTFCCDGRVMMARQK) lie on the Cytoplasmic side of the membrane. Residues 36-56 (GIFYLTLFLILGTCTLFFAFE) traverse the membrane as a helical segment. At 57 to 63 (CRYLAVQ) the chain is on the lumenal side. A helical transmembrane segment spans residues 64–84 (QSPAIPVFAAMLFLFSMATLL). Over 85–183 (RASFSDPGVI…NCVGKRNYRY (99 aa)) the chain is Cytoplasmic. One can recognise a DHHC domain in the interval 139-189 (KYCYTCKIFRPPRASHCSICDNCVERFDHHCPWVGNCVGKRNYRYFYLFIL). Cysteine 169 (S-palmitoyl cysteine intermediate) is an active-site residue. Residues 184-204 (FYLFILSLSLLTIYVFAFNIV) form a helical membrane-spanning segment. Residues 205–228 (YVALKSLKIGFLETLKETPGTVLE) are Lumenal-facing. Residues 229-249 (VLICFFTLWSVVGLTGFHTFL) traverse the membrane as a helical segment. Residues 250-364 (VALNQTTNED…PPQEAAEAEK (115 aa)) lie on the Cytoplasmic side of the membrane. Residues 303 to 364 (PLEESGSRPP…PPQEAAEAEK (62 aa)) are disordered. Polar residues predominate over residues 310–323 (RPPSTQETSSSLLP). The span at 346–356 (EMPPPEPPEPP) shows a compositional bias: pro residues.

The protein belongs to the DHHC palmitoyltransferase family. ERF2/ZDHHC9 subfamily. In terms of assembly, interacts with GOLGA7.

It is found in the endoplasmic reticulum membrane. The protein resides in the golgi apparatus membrane. It catalyses the reaction L-cysteinyl-[protein] + hexadecanoyl-CoA = S-hexadecanoyl-L-cysteinyl-[protein] + CoA. Functionally, palmitoyltransferase that catalyzes the addition of palmitate onto various protein substrates, such as ADRB2, GSDMD, HRAS, NRAS and CGAS. The ZDHHC9-GOLGA7 complex is a palmitoyltransferase specific for HRAS and NRAS. May have a palmitoyltransferase activity toward the beta-2 adrenergic receptor/ADRB2 and therefore regulate G protein-coupled receptor signaling. Acts as a regulator of innate immunity by catalyzing palmitoylation of CGAS, thereby promoting CGAS homodimerization and cyclic GMP-AMP synthase activity. Activates pyroptosis by catalyzing palmitoylation of gasdermin-D (GSDMD), thereby promoting membrane translocation and pore formation of GSDMD. The polypeptide is Palmitoyltransferase ZDHHC9 (ZDHHC9) (Pongo abelii (Sumatran orangutan)).